The chain runs to 485 residues: tRNA sulfurtransferase (485 aa).

Residues 61–165 enclose the THUMP domain; that stretch reads EELIALLQRI…DDKMMLVKAR (105 aa). Residues 183–184, Lys265, Gly287, and Gln296 each bind ATP; that span reads LI. A disulfide bridge links Cys344 with Cys456. A Rhodanese domain is found at 404-483; sequence LGENEVILDI…FSNVRVFAKN (80 aa). The active-site Cysteine persulfide intermediate is Cys456.

The protein belongs to the ThiI family.

The protein resides in the cytoplasm. The catalysed reaction is [ThiI sulfur-carrier protein]-S-sulfanyl-L-cysteine + a uridine in tRNA + 2 reduced [2Fe-2S]-[ferredoxin] + ATP + H(+) = [ThiI sulfur-carrier protein]-L-cysteine + a 4-thiouridine in tRNA + 2 oxidized [2Fe-2S]-[ferredoxin] + AMP + diphosphate. The enzyme catalyses [ThiS sulfur-carrier protein]-C-terminal Gly-Gly-AMP + S-sulfanyl-L-cysteinyl-[cysteine desulfurase] + AH2 = [ThiS sulfur-carrier protein]-C-terminal-Gly-aminoethanethioate + L-cysteinyl-[cysteine desulfurase] + A + AMP + 2 H(+). It participates in cofactor biosynthesis; thiamine diphosphate biosynthesis. In terms of biological role, catalyzes the ATP-dependent transfer of a sulfur to tRNA to produce 4-thiouridine in position 8 of tRNAs, which functions as a near-UV photosensor. Also catalyzes the transfer of sulfur to the sulfur carrier protein ThiS, forming ThiS-thiocarboxylate. This is a step in the synthesis of thiazole, in the thiamine biosynthesis pathway. The sulfur is donated as persulfide by IscS. This is tRNA sulfurtransferase from Haemophilus influenzae (strain PittGG).